Here is a 720-residue protein sequence, read N- to C-terminus: Viral guanylyltransferase VP3 (720 aa).

The protein resides in the virion. The catalysed reaction is a 5'-end diphospho-ribonucleoside in mRNA + GTP + H(+) = a 5'-end (5'-triphosphoguanosine)-ribonucleoside in mRNA + diphosphate. It carries out the reaction a 5'-end (5'-triphosphoguanosine)-ribonucleoside in mRNA + S-adenosyl-L-methionine = a 5'-end (N(7)-methyl 5'-triphosphoguanosine)-ribonucleoside in mRNA + S-adenosyl-L-homocysteine. Its function is as follows. Outer capsid protein involved in mRNA capping. Catalyzes the last 3 enzymatic activities for formation of the 5' cap structure on the viral plus-strand transcripts, namely the RNA guanylyltransferase, RNA-7N- and RNA-2'O-methyltransferase activities. This Banna virus (BAV) protein is Viral guanylyltransferase VP3 (Segment-3).